The primary structure comprises 290 residues: ATP synthase gamma chain (290 aa).

Belongs to the ATPase gamma chain family. F-type ATPases have 2 components, CF(1) - the catalytic core - and CF(0) - the membrane proton channel. CF(1) has five subunits: alpha(3), beta(3), gamma(1), delta(1), epsilon(1). CF(0) has three main subunits: a, b and c.

It is found in the cell inner membrane. In terms of biological role, produces ATP from ADP in the presence of a proton gradient across the membrane. The gamma chain is believed to be important in regulating ATPase activity and the flow of protons through the CF(0) complex. This is ATP synthase gamma chain from Chelativorans sp. (strain BNC1).